The primary structure comprises 245 residues: Thioredoxin-like 1-2, chloroplastic (245 aa).

The transit peptide at 1–92 directs the protein to the chloroplast; sequence MDAISSLGTN…TNHNMLEIQS (92 aa). The region spanning 93 to 194 is the Thioredoxin domain; that stretch reads ANHLVDSLLN…FKKALDKHGS (102 aa). Residues Cys-117 and Cys-120 each act as nucleophile in the active site. Cys-117 and Cys-120 are oxidised to a cystine.

It belongs to the thioredoxin family.

It is found in the plastid. It localises to the chloroplast. Functionally, probable thiol-disulfide oxidoreductase that may participate in various redox reactions. The polypeptide is Thioredoxin-like 1-2, chloroplastic (Arabidopsis thaliana (Mouse-ear cress)).